The primary structure comprises 181 residues: Large ribosomal subunit protein bL17 (181 aa).

Residues 141–159 are compositionally biased toward low complexity; it reads KAASATAESAPVATANDAA. Residues 141–181 form a disordered region; that stretch reads KAASATAESAPVATANDAAPAEEAEVQGVKDPAEDCEAKAD. Residues 171-181 are compositionally biased toward basic and acidic residues; that stretch reads DPAEDCEAKAD.

This sequence belongs to the bacterial ribosomal protein bL17 family. In terms of assembly, part of the 50S ribosomal subunit. Contacts protein L32.

This is Large ribosomal subunit protein bL17 from Geotalea daltonii (strain DSM 22248 / JCM 15807 / FRC-32) (Geobacter daltonii).